Consider the following 343-residue polypeptide: Galactoside alpha-(1,2)-fucosyltransferase 2 (343 aa).

Residues 1–14 (MLVVQMPFSFPMAH) lie on the Cytoplasmic side of the membrane. Residues 15–28 (FILFVFTVSTIFHV) traverse the membrane as a helical; Signal-anchor for type II membrane protein segment. At 29–343 (QQRLAKIQAM…AADLSPLLKH (315 aa)) the chain is on the lumenal side. Residues Asn188, Asn282, and Asn308 are each glycosylated (N-linked (GlcNAc...) asparagine).

The protein belongs to the glycosyltransferase 11 family.

The protein localises to the golgi apparatus. The protein resides in the golgi stack membrane. The enzyme catalyses a beta-D-galactosyl-(1-&gt;3)-N-acetyl-beta-D-glucosaminyl derivative + GDP-beta-L-fucose = an alpha-L-Fuc-(1-&gt;2)-beta-D-Gal-(1-&gt;3)-beta-D-GlcNAc derivative + GDP + H(+). The catalysed reaction is a beta-D-galactosyl-(1-&gt;4)-N-acetyl-beta-D-glucosaminyl derivative + GDP-beta-L-fucose = an alpha-L-Fuc-(1-&gt;2)-beta-D-Gal-(1-&gt;4)-beta-D-GlcNAc derivative + GDP + H(+). It carries out the reaction a neolactoside nLc4Cer + GDP-beta-L-fucose = a neolactoside IV(2)-alpha-Fuc-nLc4Cer + GDP + H(+). It catalyses the reaction a neolactoside nLc4Cer(d18:1(4E)) + GDP-beta-L-fucose = a neolactoside IV(2)-alpha-Fuc-nLc4Cer(d18:1(4E)) + GDP + H(+). The enzyme catalyses a ganglioside GM1 + GDP-beta-L-fucose = a ganglioside Fuc-GM1 + GDP + H(+). The catalysed reaction is a ganglioside GA1 + GDP-beta-L-fucose = a ganglioside Fuc-GA1 + GDP + H(+). It carries out the reaction Lc4Cer + GDP-beta-L-fucose = alpha-L-fucosyl-(1-&gt;2)-beta-D-galactosyl-(1-&gt;3)-N-acetyl-beta-D-glucosaminyl-(1-&gt;3)-beta-D-galactosyl-(1-&gt;4)-beta-D-glucosyl-(1&lt;-&gt;1')-ceramide + GDP + H(+). It catalyses the reaction a beta-D-Gal-(1-&gt;3)-beta-D-GlcNAc-(1-&gt;3)-beta-D-Gal-(1-&gt;4)-beta-D-Glc-(1&lt;-&gt;1')-Cer(d18:1(4E)) + GDP-beta-L-fucose = alpha-L-fucosyl-(1-&gt;2)- beta-D-galactosyl-(1-&gt;3)-N-acetyl-beta-D-glucosaminyl-(1-&gt;3)-beta-D-galactosyl-(1-&gt;4)-beta-D-glucosyl-(1&lt;-&gt;1')-N-acylsphing-4-enine + GDP + H(+). The enzyme catalyses a ganglioside GD1b + GDP-beta-L-fucose = a ganglioside Fuc-GD1b + GDP + H(+). The catalysed reaction is a ganglioside GM1 (d18:1(4E)) + GDP-beta-L-fucose = a ganglioside Fuc-GM1 (d18:1(4E)) + GDP + H(+). It carries out the reaction a globoside GalGb4Cer (d18:1(4E)) + GDP-beta-L-fucose = a globoside Globo-H (d18:1(4E)) + GDP + H(+). It catalyses the reaction a lactoside III(4)-a-Fuc-Lc4Cer + GDP-beta-L-fucose = a lactoside IV(2),III(4)-a-[Fuc]2-Lc4Cer + GDP + H(+). The enzyme catalyses beta-D-galactosyl-(1-&gt;3)-N-acetyl-D-galactosamine + GDP-beta-L-fucose = alpha-L-fucosyl-(1-&gt;2)-beta-D-galactosyl-(1-&gt;3)-N-acetyl-D-galactosamine + GDP + H(+). The protein operates within protein modification; protein glycosylation. Functionally, catalyzes the transfer of L-fucose, from a guanosine diphosphate-beta-L-fucose, to the terminal galactose on both O- and N-linked glycans chains of cell surface glycoproteins and glycolipids and the resulting epitope regulates several processes such as cell-cell interaction including host-microbe interaction, cell surface expression and cell proliferation. Preferentially fucosylates gangliosides GA1 and GM1 in the antrum, cecum and colon and in the female reproductive organs. Fucosylated host glycoproteins or glycolipids mediate interaction with intestinal microbiota influencing its composition. Creates a soluble precursor oligosaccharide FuC-alpha ((1,2)Galbeta-) called the H antigen which is an essential substrate for the final step in the soluble ABO blood group antigen synthesis pathway. The protein is Galactoside alpha-(1,2)-fucosyltransferase 2 of Hylobates lar (Lar gibbon).